We begin with the raw amino-acid sequence, 286 residues long: Bifunctional protein FolD (286 aa).

NADP(+) contacts are provided by residues 166-168 (GAS) and Ile232.

This sequence belongs to the tetrahydrofolate dehydrogenase/cyclohydrolase family. In terms of assembly, homodimer.

The catalysed reaction is (6R)-5,10-methylene-5,6,7,8-tetrahydrofolate + NADP(+) = (6R)-5,10-methenyltetrahydrofolate + NADPH. It catalyses the reaction (6R)-5,10-methenyltetrahydrofolate + H2O = (6R)-10-formyltetrahydrofolate + H(+). The protein operates within one-carbon metabolism; tetrahydrofolate interconversion. In terms of biological role, catalyzes the oxidation of 5,10-methylenetetrahydrofolate to 5,10-methenyltetrahydrofolate and then the hydrolysis of 5,10-methenyltetrahydrofolate to 10-formyltetrahydrofolate. This is Bifunctional protein FolD from Vibrio parahaemolyticus serotype O3:K6 (strain RIMD 2210633).